A 467-amino-acid polypeptide reads, in one-letter code: Glutamate--tRNA ligase (467 aa).

A 'HIGH' region motif is present at residues 9–19; sequence PSPTGYLHIGG. The short motif at 237 to 241 is the 'KMSKS' region element; sequence KLSKR. Position 240 (Lys240) interacts with ATP.

The protein belongs to the class-I aminoacyl-tRNA synthetase family. Glutamate--tRNA ligase type 1 subfamily. In terms of assembly, monomer.

Its subcellular location is the cytoplasm. The catalysed reaction is tRNA(Glu) + L-glutamate + ATP = L-glutamyl-tRNA(Glu) + AMP + diphosphate. Its function is as follows. Catalyzes the attachment of glutamate to tRNA(Glu) in a two-step reaction: glutamate is first activated by ATP to form Glu-AMP and then transferred to the acceptor end of tRNA(Glu). This chain is Glutamate--tRNA ligase, found in Xylella fastidiosa (strain M12).